The sequence spans 647 residues: Threonine--tRNA ligase (647 aa).

A TGS domain is found at 1-61; sequence MIKITFPDGA…TEDGSIEIVT (61 aa). Residues 242–540 are catalytic; that stretch reads DHRKLGKELD…LIENYKGAFP (299 aa). Residues Cys-336, His-387, and His-517 each contribute to the Zn(2+) site.

The protein belongs to the class-II aminoacyl-tRNA synthetase family. Homodimer. It depends on Zn(2+) as a cofactor.

Its subcellular location is the cytoplasm. It carries out the reaction tRNA(Thr) + L-threonine + ATP = L-threonyl-tRNA(Thr) + AMP + diphosphate + H(+). Functionally, catalyzes the attachment of threonine to tRNA(Thr) in a two-step reaction: L-threonine is first activated by ATP to form Thr-AMP and then transferred to the acceptor end of tRNA(Thr). Also edits incorrectly charged L-seryl-tRNA(Thr). The polypeptide is Threonine--tRNA ligase (Streptococcus gordonii (strain Challis / ATCC 35105 / BCRC 15272 / CH1 / DL1 / V288)).